Reading from the N-terminus, the 92-residue chain is N(2)-fixation sustaining protein CowN (92 aa).

This sequence belongs to the CowN family.

Its function is as follows. Is required to sustain N(2)-dependent growth in the presence of low levels of carbon monoxide (CO). Probably acts by protecting the N(2) fixation ability of the nitrogenase complex, which is inactivated in the presence of CO. This chain is N(2)-fixation sustaining protein CowN, found in Cereibacter sphaeroides (strain KD131 / KCTC 12085) (Rhodobacter sphaeroides).